A 737-amino-acid chain; its full sequence is Acetylcholinesterase (737 aa).

The N-terminal stretch at 1-38 (MEIRGLLMGRLRLGRRMVPLGLLGVTALLLILPPFALV) is a signal peptide. Residues 141–168 (HSGATPRRRGLTRRESNSDANDNDPLVV) are disordered. The N-linked (GlcNAc...) asparagine glycan is linked to Asn-220. Cys-228 and Cys-255 are oxidised to a cystine. Ser-360 functions as the Acyl-ester intermediate in the catalytic mechanism. Cys-414 and Cys-427 form a disulfide bridge. Catalysis depends on charge relay system residues Glu-486 and His-600. Cys-562 and Cys-683 are oxidised to a cystine. A glycan (N-linked (GlcNAc...) asparagine) is linked at Asn-670.

This sequence belongs to the type-B carboxylesterase/lipase family.

Its subcellular location is the synapse. The enzyme catalyses acetylcholine + H2O = choline + acetate + H(+). Its function is as follows. Rapidly hydrolyzes choline released into the synapse. The sequence is that of Acetylcholinesterase (Ace) from Anopheles gambiae (African malaria mosquito).